We begin with the raw amino-acid sequence, 166 residues long: NAD(P)H-quinone oxidoreductase subunit I, chloroplastic (166 aa).

4Fe-4S ferredoxin-type domains lie at 55–84 and 95–124; these read GRIH…VDWK and LNYS…MTEE. [4Fe-4S] cluster-binding residues include cysteine 64, cysteine 67, cysteine 70, cysteine 74, cysteine 104, cysteine 107, cysteine 110, and cysteine 114.

Belongs to the complex I 23 kDa subunit family. As to quaternary structure, NDH is composed of at least 16 different subunits, 5 of which are encoded in the nucleus. Requires [4Fe-4S] cluster as cofactor.

The protein resides in the plastid. The protein localises to the chloroplast thylakoid membrane. It carries out the reaction a plastoquinone + NADH + (n+1) H(+)(in) = a plastoquinol + NAD(+) + n H(+)(out). The catalysed reaction is a plastoquinone + NADPH + (n+1) H(+)(in) = a plastoquinol + NADP(+) + n H(+)(out). NDH shuttles electrons from NAD(P)H:plastoquinone, via FMN and iron-sulfur (Fe-S) centers, to quinones in the photosynthetic chain and possibly in a chloroplast respiratory chain. The immediate electron acceptor for the enzyme in this species is believed to be plastoquinone. Couples the redox reaction to proton translocation, and thus conserves the redox energy in a proton gradient. The chain is NAD(P)H-quinone oxidoreductase subunit I, chloroplastic from Chaenactis santolinoides (Santolina pincushion).